The primary structure comprises 69 residues: UPF0337 protein DIP1660 (69 aa).

Basic and acidic residues-rich tracts occupy residues 1-19 (MSDFENKIEELGGKAKEAV) and 30-41 (DEGRADQTKADV). The interval 1-42 (MSDFENKIEELGGKAKEAVGEATENEQLADEGRADQTKADVK) is disordered.

It belongs to the UPF0337 (CsbD) family.

The sequence is that of UPF0337 protein DIP1660 from Corynebacterium diphtheriae (strain ATCC 700971 / NCTC 13129 / Biotype gravis).